We begin with the raw amino-acid sequence, 70 residues long: Small, acid-soluble spore protein 1 (70 aa).

It belongs to the alpha/beta-type SASP family.

Functionally, SASP are bound to spore DNA. They are double-stranded DNA-binding proteins that cause DNA to change to an a-like conformation. They protect the DNA backbone from chemical and enzymatic cleavage and are thus involved in dormant spore's high resistance to UV light. The polypeptide is Small, acid-soluble spore protein 1 (sasP-1) (Geobacillus stearothermophilus (Bacillus stearothermophilus)).